We begin with the raw amino-acid sequence, 355 residues long: UDP-glucose 4-epimerase uge1 (355 aa).

Residue Thr8–Leu39 participates in NAD(+) binding.

Belongs to the NAD(P)-dependent epimerase/dehydratase family. Requires NAD(+) as cofactor.

The catalysed reaction is UDP-alpha-D-glucose = UDP-alpha-D-galactose. It functions in the pathway carbohydrate metabolism; galactose metabolism. In terms of biological role, major UDP-glucose/-galactose 4-epimerase under glucose-rich conditions involved in protein galactosylation. This chain is UDP-glucose 4-epimerase uge1 (uge1), found in Schizosaccharomyces pombe (strain 972 / ATCC 24843) (Fission yeast).